The following is a 173-amino-acid chain: Chorion class B protein Ld32 (173 aa).

Positions 1 to 7 (FVQSALS) are cleaved as a signal peptide.

Belongs to the chorion protein family.

Its function is as follows. This protein is one of many from the eggshell of the gypsy moth. This Lymantria dispar (Gypsy moth) protein is Chorion class B protein Ld32.